A 422-amino-acid polypeptide reads, in one-letter code: Transcription termination factor Rho 1 (422 aa).

The Rho RNA-BD domain occupies 49-124; the sequence is AAIGGGVVEI…VKAHSINFTD (76 aa). Residues 173–178, 185–190, and arginine 216 contribute to the ATP site; these read GKGQRA and RAGKTI.

This sequence belongs to the Rho family. In terms of assembly, homohexamer. The homohexamer assembles into an open ring structure.

Its function is as follows. Facilitates transcription termination by a mechanism that involves Rho binding to the nascent RNA, activation of Rho's RNA-dependent ATPase activity, and release of the mRNA from the DNA template. This is Transcription termination factor Rho 1 from Ehrlichia chaffeensis (strain ATCC CRL-10679 / Arkansas).